A 1088-amino-acid chain; its full sequence is RNA-directed RNA polymerase (1088 aa).

The RdRp catalytic domain maps to 501 to 687 (LSYGDVTRFL…AKRYIAGGKI (187 aa)).

This sequence belongs to the reoviridae RNA-directed RNA polymerase family. Interacts with VP3 (Potential). Interacts with VP2; this interaction activates VP1. Interacts with NSP5; this interaction is probably necessary for the formation of functional virus factories. Interacts with NSP2; this interaction is weak. Mg(2+) is required as a cofactor.

It is found in the virion. The enzyme catalyses RNA(n) + a ribonucleoside 5'-triphosphate = RNA(n+1) + diphosphate. In terms of biological role, RNA-directed RNA polymerase that is involved in both transcription and genome replication. Together with VP3 capping enzyme, forms an enzyme complex positioned near the channels situated at each of the five-fold vertices of the core. Following infection, the outermost layer of the virus is lost, leaving a double-layered particle (DLP) made up of the core and VP6 shell. VP1 then catalyzes the transcription of fully conservative plus-strand genomic RNAs that are extruded through the DLP's channels into the cytoplasm where they function as mRNAs for translation of viral proteins. One copy of each of the viral (+)RNAs is also recruited during core assembly, together with newly synthesized polymerase complexes and VP2. The polymerase of these novo-formed particles catalyzes the synthesis of complementary minus-strands leading to dsRNA formation. To do so, the polymerase specifically recognizes and binds 4 bases 5'-UGUG-3' in the conserved 3'-sequence of plus-strand RNA templates. VP2 presumably activates the autoinhibited VP1-RNA complex to coordinate packaging and genome replication. Once dsRNA synthesis is complete, the polymerase switches to the transcriptional mode, thus providing secondary transcription. In Homo sapiens (Human), this protein is RNA-directed RNA polymerase.